The chain runs to 458 residues: Sushi repeat-containing protein SRPX2 (458 aa).

The signal sequence occupies residues 1–18; the sequence is MEASITVLLFAFTKVASS. Sushi domains lie at 62 to 112, 113 to 171, and 255 to 314; these read ATCY…HCRR, IQCH…VCVD, and RRCP…TCTP. Intrachain disulfides connect cysteine 64–cysteine 98, cysteine 84–cysteine 110, cysteine 115–cysteine 156, and cysteine 142–cysteine 169. Positions 170–254 constitute an HYR domain; that stretch reads VDLDPPKIQC…SCKFIVKVQV (85 aa). 2 cysteine pairs are disulfide-bonded: cysteine 257/cysteine 299 and cysteine 285/cysteine 312.

Forms homooligomers.

Its subcellular location is the secreted. The protein resides in the cytoplasm. It is found in the cell surface. It localises to the synapse. Functionally, may play a role in angiogenesis, synapse formation, cellular migration and adhesion. The polypeptide is Sushi repeat-containing protein SRPX2 (srpx2) (Xenopus laevis (African clawed frog)).